The primary structure comprises 427 residues: Probable fatty acid methyltransferase Rv3720 (427 aa).

S-adenosyl-L-methionine contacts are provided by residues 167-168 (YT), 202-210 (LLDVGCGWG), and 227-232 (TLSAEQ).

This sequence belongs to the CFA/CMAS family.

May be a S-adenosylmethionine-dependent methyltransferase involved in fatty acid metabolism. The polypeptide is Probable fatty acid methyltransferase Rv3720 (Mycobacterium tuberculosis (strain ATCC 25618 / H37Rv)).